Here is a 246-residue protein sequence, read N- to C-terminus: Octanoyltransferase (246 aa).

A BPL/LPL catalytic domain is found at A38–P213. Residues R77–H84, S144–G146, and G157–A159 each bind substrate. C175 functions as the Acyl-thioester intermediate in the catalytic mechanism. The segment at R225–L246 is disordered.

It belongs to the LipB family.

The protein resides in the cytoplasm. The enzyme catalyses octanoyl-[ACP] + L-lysyl-[protein] = N(6)-octanoyl-L-lysyl-[protein] + holo-[ACP] + H(+). It participates in protein modification; protein lipoylation via endogenous pathway; protein N(6)-(lipoyl)lysine from octanoyl-[acyl-carrier-protein]: step 1/2. Catalyzes the transfer of endogenously produced octanoic acid from octanoyl-acyl-carrier-protein onto the lipoyl domains of lipoate-dependent enzymes. Lipoyl-ACP can also act as a substrate although octanoyl-ACP is likely to be the physiological substrate. This Alcanivorax borkumensis (strain ATCC 700651 / DSM 11573 / NCIMB 13689 / SK2) protein is Octanoyltransferase.